Consider the following 333-residue polypeptide: Cytochrome f (333 aa).

The first 44 residues, 1–44 (MRNACTRARLTRTARAMVKTLFIAIASVTFFFTSDLALPQSAAA), serve as a signal peptide directing secretion. Residues Y45, C66, C69, and H70 each contribute to the heme site. Residues 299-318 (VGWLIAFVALVMLAQVMLVL) form a helical membrane-spanning segment.

This sequence belongs to the cytochrome f family. The 4 large subunits of the cytochrome b6-f complex are cytochrome b6, subunit IV (17 kDa polypeptide, PetD), cytochrome f and the Rieske protein, while the 4 small subunits are PetG, PetL, PetM and PetN. The complex functions as a dimer. Heme serves as cofactor.

The protein resides in the cellular thylakoid membrane. Component of the cytochrome b6-f complex, which mediates electron transfer between photosystem II (PSII) and photosystem I (PSI), cyclic electron flow around PSI, and state transitions. This is Cytochrome f from Nostoc sp. (strain PCC 7120 / SAG 25.82 / UTEX 2576).